Reading from the N-terminus, the 605-residue chain is Indole-3-acetic acid-amido synthetase GH3.8 (605 aa).

Residues Ser115, 342-346, Tyr365, Asp421, and Arg440 contribute to the AMP site; that span reads MYASS.

Belongs to the IAA-amido conjugating enzyme family. Expressed in the inner floral organs (lodicules, stamens and carpels) and at lower levels in lemmas and paleas.

Functionally, catalyzes the synthesis of indole-3-acetic acid (IAA)-amino acid conjugates, providing a mechanism for the plant to cope with the presence of excessive free auxin. Produces more IAA-Asp levels than IAA-Ala levels in vitro. May participate in the activation of disease resistance by preventing the accumulation of free IAA, which reduces the expression of a group of auxin-responsive genes encoding expansins that control cell wall loosening and expansion. Contributes to late events in stamen and carpel differentiation, and influences floret fertility. In Oryza sativa subsp. indica (Rice), this protein is Indole-3-acetic acid-amido synthetase GH3.8 (GH3.8).